The chain runs to 466 residues: cAMP-dependent protein kinase regulatory subunit (466 aa).

The segment at Q25–F231 is dimerization and phosphorylation. A compositionally biased stretch (low complexity) spans A71–A80. Disordered stretches follow at residues A71–S90, S109–F139, N154–P179, and S193–E218. Over residues N81–S90 the composition is skewed to polar residues. Residues S109–S118 are compositionally biased toward basic and acidic residues. At S193 the chain carries Phosphoserine. Over residues Q200–E218 the composition is skewed to basic and acidic residues. 3',5'-cyclic AMP contacts are provided by residues L232 to N347, E297, R306, I350 to H466, E416, and R425.

It belongs to the cAMP-dependent kinase regulatory chain family. In terms of assembly, tetramer, composed of 2 regulatory (R) and 2 catalytic (C) subunits. In the presence of cAMP it dissociates into 2 active monomeric C subunits and an R dimer.

This is cAMP-dependent protein kinase regulatory subunit (PKAR) from Kluyveromyces lactis (strain ATCC 8585 / CBS 2359 / DSM 70799 / NBRC 1267 / NRRL Y-1140 / WM37) (Yeast).